The primary structure comprises 135 residues: L-ectoine synthase (135 aa).

It belongs to the ectoine synthase family.

It catalyses the reaction (2S)-4-acetamido-2-aminobutanoate = L-ectoine + H2O. The protein operates within amine and polyamine biosynthesis; ectoine biosynthesis; L-ectoine from L-aspartate 4-semialdehyde: step 3/3. Catalyzes the circularization of gamma-N-acetyl-alpha,gamma-diaminobutyric acid (ADABA) to ectoine (1,4,5,6-tetrahydro-2-methyl-4-pyrimidine carboxylic acid), which is an excellent osmoprotectant. The sequence is that of L-ectoine synthase from Saccharopolyspora erythraea (strain ATCC 11635 / DSM 40517 / JCM 4748 / NBRC 13426 / NCIMB 8594 / NRRL 2338).